Reading from the N-terminus, the 357-residue chain is tRNA-specific 2-thiouridylase MnmA (357 aa).

Residues 6–13 (AMSGGVDS) and Leu-32 contribute to the ATP site. Cys-101 serves as the catalytic Nucleophile. Cys-101 and Cys-193 are oxidised to a cystine. Gly-125 is a binding site for ATP. The interval 143-145 (KDQ) is interaction with tRNA. Catalysis depends on Cys-193, which acts as the Cysteine persulfide intermediate.

Belongs to the MnmA/TRMU family.

The protein resides in the cytoplasm. The catalysed reaction is S-sulfanyl-L-cysteinyl-[protein] + uridine(34) in tRNA + AH2 + ATP = 2-thiouridine(34) in tRNA + L-cysteinyl-[protein] + A + AMP + diphosphate + H(+). Functionally, catalyzes the 2-thiolation of uridine at the wobble position (U34) of tRNA, leading to the formation of s(2)U34. The chain is tRNA-specific 2-thiouridylase MnmA from Mycolicibacterium gilvum (strain PYR-GCK) (Mycobacterium gilvum (strain PYR-GCK)).